A 268-amino-acid chain; its full sequence is MLPYPQIDPVALAIGPLKIHWYGLMYLIGIGGAWLLASRRLNRFDPTWSREKLSDLVFWLSMGVIVGGRLGYVLFYDLHAYLANPTLIFEVWKGGMSFHGGFIGVMLAALWFGKRNNKSFFELMDFVAPLVPIGLGAGRIGNFINAELWGKPTDVPWAMIFPPFSDPAQLPRHPSQLYQFALEGVALFVILWLFSRKPRPTMAVSGMFALFYGIFRFIVEFVRVPDAQLGYIAWGWLTMGQILCVPMILAGLGLIWWAYNRKPTAKPA.

Helical transmembrane passes span 10 to 30, 56 to 76, 92 to 112, 120 to 140, 174 to 194, 202 to 222, and 236 to 256; these read VALAIGPLKIHWYGLMYLIGI, LVFWLSMGVIVGGRLGYVLFY, WKGGMSFHGGFIGVMLAALWF, FFELMDFVAPLVPIGLGAGRI, PSQLYQFALEGVALFVILWLF, MAVSGMFALFYGIFRFIVEFV, and WLTMGQILCVPMILAGLGLIW. R139 contacts a 1,2-diacyl-sn-glycero-3-phospho-(1'-sn-glycerol).

Belongs to the Lgt family.

It localises to the cell inner membrane. It carries out the reaction L-cysteinyl-[prolipoprotein] + a 1,2-diacyl-sn-glycero-3-phospho-(1'-sn-glycerol) = an S-1,2-diacyl-sn-glyceryl-L-cysteinyl-[prolipoprotein] + sn-glycerol 1-phosphate + H(+). It participates in protein modification; lipoprotein biosynthesis (diacylglyceryl transfer). In terms of biological role, catalyzes the transfer of the diacylglyceryl group from phosphatidylglycerol to the sulfhydryl group of the N-terminal cysteine of a prolipoprotein, the first step in the formation of mature lipoproteins. This chain is Phosphatidylglycerol--prolipoprotein diacylglyceryl transferase, found in Pseudomonas putida (strain ATCC 700007 / DSM 6899 / JCM 31910 / BCRC 17059 / LMG 24140 / F1).